The chain runs to 79 residues: Cytochrome b-c1 complex subunit 10 (79 aa).

The Mitochondrial matrix portion of the chain corresponds to 1-23; it reads MISFFPNKPMYHVQPHISFITPE. A helical membrane pass occupies residues 24-47; that stretch reads RTMKTIPAFSRWAFAAVAGVFVFA. Residues 48–79 are Mitochondrial intermembrane-facing; it reads MQVPKVKTTILQPIAFIGDHFKDKTPEEDKWL.

The protein belongs to the UQCR11/QCR10 family. In terms of assembly, component of the ubiquinol-cytochrome c oxidoreductase (cytochrome b-c1 complex, complex III, CIII), a multisubunit enzyme composed of 3 respiratory subunits cytochrome b, cytochrome c1 and Rieske protein, 2 core protein subunits, and additional low-molecular weight protein subunits. The complex exists as an obligatory dimer and forms supercomplexes (SCs) in the inner mitochondrial membrane with cytochrome c oxidase (complex IV, CIV).

The protein localises to the mitochondrion inner membrane. Functionally, component of the ubiquinol-cytochrome c oxidoreductase, a multisubunit transmembrane complex that is part of the mitochondrial electron transport chain which drives oxidative phosphorylation. The respiratory chain contains 3 multisubunit complexes succinate dehydrogenase (complex II, CII), ubiquinol-cytochrome c oxidoreductase (cytochrome b-c1 complex, complex III, CIII) and cytochrome c oxidase (complex IV, CIV), that cooperate to transfer electrons derived from NADH and succinate to molecular oxygen, creating an electrochemical gradient over the inner membrane that drives transmembrane transport and the ATP synthase. The cytochrome b-c1 complex catalyzes electron transfer from ubiquinol to cytochrome c, linking this redox reaction to translocation of protons across the mitochondrial inner membrane, with protons being carried across the membrane as hydrogens on the quinol. In the process called Q cycle, 2 protons are consumed from the matrix, 4 protons are released into the intermembrane space and 2 electrons are passed to cytochrome c. QCR10 has a role in CIII assembly and RIP1 stability. The protein is Cytochrome b-c1 complex subunit 10 of Schizosaccharomyces pombe (strain 972 / ATCC 24843) (Fission yeast).